The chain runs to 874 residues: Alanine--tRNA ligase (874 aa).

Zn(2+) is bound by residues His562, His566, Cys664, and His668.

This sequence belongs to the class-II aminoacyl-tRNA synthetase family. The cofactor is Zn(2+).

Its subcellular location is the cytoplasm. The enzyme catalyses tRNA(Ala) + L-alanine + ATP = L-alanyl-tRNA(Ala) + AMP + diphosphate. Catalyzes the attachment of alanine to tRNA(Ala) in a two-step reaction: alanine is first activated by ATP to form Ala-AMP and then transferred to the acceptor end of tRNA(Ala). Also edits incorrectly charged Ser-tRNA(Ala) and Gly-tRNA(Ala) via its editing domain. The polypeptide is Alanine--tRNA ligase (Shewanella oneidensis (strain ATCC 700550 / JCM 31522 / CIP 106686 / LMG 19005 / NCIMB 14063 / MR-1)).